We begin with the raw amino-acid sequence, 273 residues long: Large ribosomal subunit protein uL2 (273 aa).

Disordered stretches follow at residues 28–53 and 221–273; these read KPFA…TTRH and RGTA…RRSK. The segment covering 39 to 48 has biased composition (low complexity); that stretch reads KSGGRNNNGR. An N6-acetyllysine modification is found at lysine 242.

Belongs to the universal ribosomal protein uL2 family. Part of the 50S ribosomal subunit. Forms a bridge to the 30S subunit in the 70S ribosome.

Its function is as follows. One of the primary rRNA binding proteins. Required for association of the 30S and 50S subunits to form the 70S ribosome, for tRNA binding and peptide bond formation. It has been suggested to have peptidyltransferase activity; this is somewhat controversial. Makes several contacts with the 16S rRNA in the 70S ribosome. In Escherichia coli (strain SE11), this protein is Large ribosomal subunit protein uL2.